The following is an 81-amino-acid chain: Translational regulator CsrA (81 aa).

Belongs to the CsrA/RsmA family. In terms of assembly, homodimer; the beta-strands of each monomer intercalate to form a hydrophobic core, while the alpha-helices form wings that extend away from the core.

The protein localises to the cytoplasm. A translational regulator that binds mRNA to regulate translation initiation and/or mRNA stability. Usually binds in the 5'-UTR at or near the Shine-Dalgarno sequence preventing ribosome-binding, thus repressing translation. Its main target seems to be the major flagellin gene, while its function is anatagonized by FliW. This chain is Translational regulator CsrA, found in Desulforapulum autotrophicum (strain ATCC 43914 / DSM 3382 / VKM B-1955 / HRM2) (Desulfobacterium autotrophicum).